Reading from the N-terminus, the 188-residue chain is Elongation factor P (188 aa).

The protein belongs to the elongation factor P family.

The protein localises to the cytoplasm. The protein operates within protein biosynthesis; polypeptide chain elongation. Its function is as follows. Involved in peptide bond synthesis. Stimulates efficient translation and peptide-bond synthesis on native or reconstituted 70S ribosomes in vitro. Probably functions indirectly by altering the affinity of the ribosome for aminoacyl-tRNA, thus increasing their reactivity as acceptors for peptidyl transferase. The polypeptide is Elongation factor P (Christiangramia forsetii (strain DSM 17595 / CGMCC 1.15422 / KT0803) (Gramella forsetii)).